Reading from the N-terminus, the 520-residue chain is T-box transcription factor TBX22 (520 aa).

The segment at Met1–Asp91 is disordered. Positions Pro33–Ser49 are enriched in basic and acidic residues. Residues Ser67–Ser84 show a composition bias toward low complexity. Residues Leu96–Asp283 constitute a DNA-binding region (T-box).

As to expression, seems to be expressed at a low level.

The protein resides in the nucleus. Functionally, probable transcriptional regulator involved in developmental processes. This is major determinant crucial to palatogenesis. This Homo sapiens (Human) protein is T-box transcription factor TBX22 (TBX22).